A 144-amino-acid chain; its full sequence is Gastric inhibitory polypeptide (144 aa).

The first 21 residues, 1–21 (MVALKTCSLLLVLLFLAVGLG), serve as a signal peptide directing secretion. 2 consecutive propeptides follow at residues 22 to 42 (EKEE…PRGP) and 87 to 144 (EARA…LRSQ). Residues 94 to 113 (AGQSQGKEDKEAQESSLPKS) are disordered.

This sequence belongs to the glucagon family.

The protein localises to the secreted. Its function is as follows. Potent stimulator of insulin secretion and relatively poor inhibitor of gastric acid secretion. The chain is Gastric inhibitory polypeptide (Gip) from Mus musculus (Mouse).